The following is a 266-amino-acid chain: Interleukin-1 beta (266 aa).

The propeptide occupies 1–113 (MATVPEPTNE…ETYDDDLLCD (113 aa)).

It belongs to the IL-1 family. Monomer. In its precursor form, weakly interacts with full-length MEFV; the mature cytokine does not interact at all. Interacts with integrins ITGAV:ITGBV and ITGA5:ITGB1; integrin-binding is required for IL1B signaling. Interacts with cargo receptor TMED10; the interaction is direct and is required for the secretion of IL1B mature form. Interacts with HSP90AB1; the interaction facilitates cargo translocation into the ERGIC. Interacts with HSP90B1; the interaction facilitates cargo translocation into the ERGIC.

The protein localises to the cytoplasm. Its subcellular location is the cytosol. It localises to the secreted. The protein resides in the lysosome. It is found in the extracellular exosome. In terms of biological role, potent pro-inflammatory cytokine. Initially discovered as the major endogenous pyrogen, induces prostaglandin synthesis, neutrophil influx and activation, T-cell activation and cytokine production, B-cell activation and antibody production, and fibroblast proliferation and collagen production. Promotes Th17 differentiation of T-cells. Synergizes with IL12/interleukin-12 to induce IFNG synthesis from T-helper 1 (Th1) cells. Plays a role in angiogenesis by inducing VEGF production synergistically with TNF and IL6. Involved in transduction of inflammation downstream of pyroptosis: its mature form is specifically released in the extracellular milieu by passing through the gasdermin-D (GSDMD) pore. The polypeptide is Interleukin-1 beta (IL1B) (Delphinapterus leucas (Beluga whale)).